The sequence spans 339 residues: Aspartate carbamoyltransferase catalytic subunit (339 aa).

Residues arginine 60 and threonine 61 each contribute to the carbamoyl phosphate site. Lysine 88 contributes to the L-aspartate binding site. 3 residues coordinate carbamoyl phosphate: arginine 110, histidine 143, and glutamine 146. L-aspartate contacts are provided by arginine 183 and arginine 254. Positions 295 and 296 each coordinate carbamoyl phosphate.

It belongs to the aspartate/ornithine carbamoyltransferase superfamily. ATCase family. As to quaternary structure, heterododecamer (2C3:3R2) of six catalytic PyrB chains organized as two trimers (C3), and six regulatory PyrI chains organized as three dimers (R2).

The catalysed reaction is carbamoyl phosphate + L-aspartate = N-carbamoyl-L-aspartate + phosphate + H(+). Its pathway is pyrimidine metabolism; UMP biosynthesis via de novo pathway; (S)-dihydroorotate from bicarbonate: step 2/3. Its function is as follows. Catalyzes the condensation of carbamoyl phosphate and aspartate to form carbamoyl aspartate and inorganic phosphate, the committed step in the de novo pyrimidine nucleotide biosynthesis pathway. This Prochlorococcus marinus (strain MIT 9312) protein is Aspartate carbamoyltransferase catalytic subunit.